The following is a 407-amino-acid chain: Elongation factor Tu (407 aa).

In terms of domain architecture, tr-type G spans 10-217 (KPHVNVGTIG…TLDTYIPDPE (208 aa)). A G1 region spans residues 19-26 (GHVDHGKT). 19-26 (GHVDHGKT) contacts GTP. Thr26 is a binding site for Mg(2+). A G2 region spans residues 60-64 (GITIS). The segment at 81–84 (DCPG) is G3. Residues 81–85 (DCPGH) and 136–139 (NKSD) each bind GTP. Residues 136–139 (NKSD) form a G4 region. The tract at residues 184 to 186 (SAL) is G5.

This sequence belongs to the TRAFAC class translation factor GTPase superfamily. Classic translation factor GTPase family. EF-Tu/EF-1A subfamily. As to quaternary structure, monomer.

It localises to the cytoplasm. It carries out the reaction GTP + H2O = GDP + phosphate + H(+). GTP hydrolase that promotes the GTP-dependent binding of aminoacyl-tRNA to the A-site of ribosomes during protein biosynthesis. The sequence is that of Elongation factor Tu from Marinomonas sp. (strain MWYL1).